The sequence spans 571 residues: Proline--tRNA ligase (571 aa).

This sequence belongs to the class-II aminoacyl-tRNA synthetase family. ProS type 1 subfamily. Homodimer.

It localises to the cytoplasm. The catalysed reaction is tRNA(Pro) + L-proline + ATP = L-prolyl-tRNA(Pro) + AMP + diphosphate. Catalyzes the attachment of proline to tRNA(Pro) in a two-step reaction: proline is first activated by ATP to form Pro-AMP and then transferred to the acceptor end of tRNA(Pro). As ProRS can inadvertently accommodate and process non-cognate amino acids such as alanine and cysteine, to avoid such errors it has two additional distinct editing activities against alanine. One activity is designated as 'pretransfer' editing and involves the tRNA(Pro)-independent hydrolysis of activated Ala-AMP. The other activity is designated 'posttransfer' editing and involves deacylation of mischarged Ala-tRNA(Pro). The misacylated Cys-tRNA(Pro) is not edited by ProRS. The polypeptide is Proline--tRNA ligase (Actinobacillus pleuropneumoniae serotype 7 (strain AP76)).